The sequence spans 1139 residues: Ras GTPase-activating protein nGAP (1139 aa).

The tract at residues 1-87 is disordered; the sequence is MQTPEVPAER…SRGLPKLKES (87 aa). Serine 16 is modified (phosphoserine). Residues 17-36 show a composition bias toward polar residues; it reads ISGTSTSEKPNSMDTANTSP. The PH domain maps to 41–158; the sequence is GFFSKRLKGS…WMENLRRTVQ (118 aa). Residues 45–56 show a composition bias toward basic residues; that stretch reads KRLKGSIKRTKS. Over residues 73–87 the composition is skewed to basic and acidic residues; that stretch reads STDDRSRGLPKLKES. Position 89 is a phosphoserine (serine 89). Residues 149 to 267 enclose the C2 domain; it reads WMENLRRTVQ…TGRQFVEKWY (119 aa). The region spanning 343 to 551 is the Ras-GAP domain; the sequence is GRAKDFLTDL…GGMKRFLLEI (209 aa). Threonine 620 carries the phosphothreonine modification. Phosphoserine is present on serine 663. Disordered regions lie at residues 684–704, 751–782, 803–869, 910–953, and 1116–1139; these read ASSQ…LPNG, ETQS…LSFQ, SLEN…GQAQ, EPVQ…SATM, and NGIS…NSSC. 2 stretches are compositionally biased toward polar residues: residues 751-760 and 803-818; these read ETQSTPQSAP and SLEN…QSNS. The segment covering 833–855 has biased composition (basic and acidic residues); that stretch reads DFTKRSTQSEDFSRRHTVPDRHI. Phosphoserine is present on serine 864. Residues 916 to 928 are compositionally biased toward low complexity; it reads SRSRQQSSSSRES.

As to quaternary structure, interacts with PEAK1.

Inhibitory regulator of the Ras-cyclic AMP pathway. The polypeptide is Ras GTPase-activating protein nGAP (RASAL2) (Homo sapiens (Human)).